The sequence spans 84 residues: Putative membrane protein insertion efficiency factor (84 aa).

The segment at 63–84 (WGGSGYDPVPGADPEHDRRPRG) is disordered. Positions 75–84 (DPEHDRRPRG) are enriched in basic and acidic residues.

Belongs to the UPF0161 family.

Its subcellular location is the cell inner membrane. Its function is as follows. Could be involved in insertion of integral membrane proteins into the membrane. The polypeptide is Putative membrane protein insertion efficiency factor (Cereibacter sphaeroides (strain ATCC 17029 / ATH 2.4.9) (Rhodobacter sphaeroides)).